The sequence spans 417 residues: Phosphoglycerate kinase (417 aa).

Positions 23, 24, 25, 26, 39, 40, 63, 64, 66, 67, 122, 123, 170, and 171 each coordinate (2R)-3-phosphoglycerate. Gly-214 serves as a coordination point for ADP. Gly-214 contributes to the CDP binding site. Residues Ala-215 and Lys-216 each contribute to the AMP site. An ATP-binding site is contributed by Ala-215. Ala-215 contacts Mg(2+). Asp-219 serves as a coordination point for CDP. Asp-219 serves as a coordination point for Mg(2+). Lys-220 provides a ligand contact to AMP. Lys-220 provides a ligand contact to ATP. ADP is bound at residue Gly-238. Gly-238 is a binding site for CDP. Residues Ala-239 and Gly-313 each contribute to the AMP site. ATP contacts are provided by Ala-239 and Gly-313. Residues Gly-338 and Phe-343 each coordinate CDP. Residue Phe-343 participates in ADP binding. Position 344 (Glu-344) interacts with AMP. Residues Glu-344, Asp-375, and Thr-376 each contribute to the ATP site. Asp-375 contacts Mg(2+).

Belongs to the phosphoglycerate kinase family. In terms of assembly, monomer. It depends on Mg(2+) as a cofactor.

It localises to the cytoplasm. The protein localises to the mitochondrion. It catalyses the reaction (2R)-3-phosphoglycerate + ATP = (2R)-3-phospho-glyceroyl phosphate + ADP. Its pathway is carbohydrate degradation; glycolysis; pyruvate from D-glyceraldehyde 3-phosphate: step 2/5. Its function is as follows. Catalyzes one of the two ATP producing reactions in the glycolytic pathway via the reversible conversion of 1,3-diphosphoglycerate to 3-phosphoglycerate. Both L- and D- forms of purine and pyrimidine nucleotides can be used as substrates, but the activity is much lower on pyrimidines. Negatively regulates the biosynthesis of acetyl-CoA from pyruvate in the mitochondrion. The polypeptide is Phosphoglycerate kinase (pgkA) (Aspergillus oryzae (strain ATCC 42149 / RIB 40) (Yellow koji mold)).